An 86-amino-acid chain; its full sequence is Small ribosomal subunit protein bS20 (86 aa).

Positions 1-26 are disordered; it reads MANIKSAKKRALQSEKSRKHNASRRT.

It belongs to the bacterial ribosomal protein bS20 family.

In terms of biological role, binds directly to 16S ribosomal RNA. The sequence is that of Small ribosomal subunit protein bS20 from Psychromonas ingrahamii (strain DSM 17664 / CCUG 51855 / 37).